Reading from the N-terminus, the 206-residue chain is N-(5'-phosphoribosyl)anthranilate isomerase (206 aa).

It belongs to the TrpF family.

It catalyses the reaction N-(5-phospho-beta-D-ribosyl)anthranilate = 1-(2-carboxyphenylamino)-1-deoxy-D-ribulose 5-phosphate. It functions in the pathway amino-acid biosynthesis; L-tryptophan biosynthesis; L-tryptophan from chorismate: step 3/5. The chain is N-(5'-phosphoribosyl)anthranilate isomerase from Pseudomonas putida (strain W619).